A 330-amino-acid polypeptide reads, in one-letter code: uncharacterized protein (330 aa).

This is an uncharacterized protein from Acanthamoeba polyphaga (Amoeba).